Reading from the N-terminus, the 331-residue chain is Activator of 90 kDa heat shock protein ATPase homolog 2 (331 aa).

Belongs to the AHA1 family.

Co-chaperone that stimulates HSP90 ATPase activity. This Mus musculus (Mouse) protein is Activator of 90 kDa heat shock protein ATPase homolog 2 (Ahsa2).